The following is a 413-amino-acid chain: Protein PHR1-LIKE 1 (413 aa).

2 disordered regions span residues 171-196 (SEPN…TPFL) and 208-233 (QQQM…SKQR). 2 stretches are compositionally biased toward polar residues: residues 181 to 191 (DSSSHNPNSEI) and 208 to 231 (QQQM…ATSK). Positions 228 to 288 (ATSKQRMRWT…HLQKYRTARY (61 aa)) constitute an HTH myb-type domain. Positions 259–284 (PKAVLKLLNNPGLTIYHVKSHLQKYR) form a DNA-binding region, H-T-H motif. Residues 322-342 (TQALRLQMEVQKRLHEQLEIQ) are coiled coil. The LHEQLE signature appears at 335 to 340 (LHEQLE). Positions 363 to 413 (QQKIQDNKSSSSEASPKQCNGSFAEVEVGLETLTGDQNESASASRKRVRED) are disordered. 2 stretches are compositionally biased toward polar residues: residues 369–383 (NKSS…QCNG) and 396–405 (TGDQNESASA).

This sequence belongs to the MYB-CC family. In terms of assembly, homodimers and heterodimers. Interacts with MED25. Does not interact with PHL2 or PHL3. Expressed in shoots and roots.

Its subcellular location is the nucleus. In terms of biological role, transcription factor acting as central integrator of phosphate starvation responses. Regulates FER1 expression upon phosphate starvation, linking iron and phosphate homeostasis. The protein is Protein PHR1-LIKE 1 (PHL1) of Arabidopsis thaliana (Mouse-ear cress).